Reading from the N-terminus, the 664-residue chain is DNA ligase (664 aa).

NAD(+) is bound by residues 32 to 36 (DAEYD), 81 to 82 (SL), and Glu113. The active-site N6-AMP-lysine intermediate is Lys115. Arg136, Glu173, Lys289, and Lys313 together coordinate NAD(+). Zn(2+) contacts are provided by Cys407, Cys410, Cys425, and Cys431. Residues 586–664 (ASEQPFAGKT…EEQLQAALQS (79 aa)) form the BRCT domain.

This sequence belongs to the NAD-dependent DNA ligase family. LigA subfamily. The cofactor is Mg(2+). Mn(2+) is required as a cofactor.

The catalysed reaction is NAD(+) + (deoxyribonucleotide)n-3'-hydroxyl + 5'-phospho-(deoxyribonucleotide)m = (deoxyribonucleotide)n+m + AMP + beta-nicotinamide D-nucleotide.. Functionally, DNA ligase that catalyzes the formation of phosphodiester linkages between 5'-phosphoryl and 3'-hydroxyl groups in double-stranded DNA using NAD as a coenzyme and as the energy source for the reaction. It is essential for DNA replication and repair of damaged DNA. In Aeromonas salmonicida (strain A449), this protein is DNA ligase.